Reading from the N-terminus, the 254-residue chain is Probable pectate lyase E (254 aa).

Positions 1-17 are cleaved as a signal peptide; that stretch reads MLQSLLLLPLFLTSAFA. Asn-175 carries an N-linked (GlcNAc...) asparagine glycan. The tract at residues 228-254 is disordered; sequence NNNGKEPKKKSSGPSKACEYNQPLKKC.

Belongs to the polysaccharide lyase 3 family. Requires Ca(2+) as cofactor.

The protein localises to the secreted. It catalyses the reaction Eliminative cleavage of (1-&gt;4)-alpha-D-galacturonan to give oligosaccharides with 4-deoxy-alpha-D-galact-4-enuronosyl groups at their non-reducing ends.. Pectinolytic enzyme consist of four classes of enzymes: pectin lyase, polygalacturonase, pectin methylesterase and rhamnogalacturonase. Among pectinolytic enzymes, pectin lyase is the most important in depolymerization of pectin, since it cleaves internal glycosidic bonds of highly methylated pectins. Favors pectate, the anion, over pectin, the methyl ester. This Aspergillus clavatus (strain ATCC 1007 / CBS 513.65 / DSM 816 / NCTC 3887 / NRRL 1 / QM 1276 / 107) protein is Probable pectate lyase E (plyE).